Reading from the N-terminus, the 58-residue chain is Small ribosomal subunit protein bS21 (58 aa).

The segment at 37–58 is disordered; sequence FYEKPSVKRKRKSEAARKRKKF. Positions 43-58 are enriched in basic residues; sequence VKRKRKSEAARKRKKF.

This sequence belongs to the bacterial ribosomal protein bS21 family.

The sequence is that of Small ribosomal subunit protein bS21 from Streptococcus sanguinis (strain SK36).